The chain runs to 204 residues: Serotonin N-acetyltransferase (204 aa).

T28 is subject to Phosphothreonine; by PKA. One can recognise an N-acetyltransferase domain in the interval 32-193; the sequence is SEFRCLTPED…SFTELHCSLQ (162 aa). L121 contributes to the substrate binding site. Acetyl-CoA-binding positions include 121 to 123 and 129 to 134; these read LAV and QQGRGP. M156 contacts substrate. Position 165-167 (165-167) interacts with acetyl-CoA; it reads YER. At S202 the chain carries Phosphoserine.

Belongs to the acetyltransferase family. AANAT subfamily. As to quaternary structure, monomer. Interacts with several 14-3-3 proteins, including YWHAB, YWHAE, YWHAG and YWHAZ, preferentially when phosphorylated at Thr-28. Phosphorylation on Ser-202 also allows binding to YWHAZ, but with lower affinity. The interaction with YWHAZ considerably increases affinity for arylalkylamines and acetyl-CoA and protects the enzyme from dephosphorylation and proteasomal degradation. It may also prevent thiol-dependent inactivation. CAMP-dependent phosphorylation regulates AANAT activity by promoting interaction with 14-3-3 proteins. Phosphorylation levels exhibit night/day variations, with an increase during nighttime. Highly expressed in pineal gland and in the photoreceptor outer segments in the retina. Expressed at about 100-fold lower levels in the pituitary gland and testis. Not detected in other tissues.

It localises to the cytoplasm. The enzyme catalyses a 2-arylethylamine + acetyl-CoA = an N-acetyl-2-arylethylamine + CoA + H(+). It functions in the pathway aromatic compound metabolism; melatonin biosynthesis; melatonin from serotonin: step 1/2. Functionally, controls the night/day rhythm of melatonin production in the pineal gland. Catalyzes the N-acetylation of serotonin into N-acetylserotonin, the penultimate step in the synthesis of melatonin. The chain is Serotonin N-acetyltransferase (AANAT) from Macaca mulatta (Rhesus macaque).